A 516-amino-acid chain; its full sequence is Cysteine--tRNA ligase (516 aa).

Zn(2+) is bound at residue Cys32. A 'HIGH' region motif is present at residues 34 to 44; the sequence is PTVYMYAHIGN. The Zn(2+) site is built by Cys230, His255, and Glu259. Residues 287-291 carry the 'KMSKS' region motif; it reads KMSKS. Residue Lys290 coordinates ATP.

Belongs to the class-I aminoacyl-tRNA synthetase family. Monomer. Requires Zn(2+) as cofactor.

Its subcellular location is the cytoplasm. The enzyme catalyses tRNA(Cys) + L-cysteine + ATP = L-cysteinyl-tRNA(Cys) + AMP + diphosphate. The protein is Cysteine--tRNA ligase of Salinibacter ruber (strain DSM 13855 / M31).